Reading from the N-terminus, the 658-residue chain is Threonine--tRNA ligase (658 aa).

In terms of domain architecture, TGS spans Met-1–Thr-64. Residues Asp-246–Pro-549 are catalytic. 3 residues coordinate Zn(2+): Cys-343, His-394, and His-526.

Belongs to the class-II aminoacyl-tRNA synthetase family. Homodimer. It depends on Zn(2+) as a cofactor.

It is found in the cytoplasm. It carries out the reaction tRNA(Thr) + L-threonine + ATP = L-threonyl-tRNA(Thr) + AMP + diphosphate + H(+). Its function is as follows. Catalyzes the attachment of threonine to tRNA(Thr) in a two-step reaction: L-threonine is first activated by ATP to form Thr-AMP and then transferred to the acceptor end of tRNA(Thr). Also edits incorrectly charged L-seryl-tRNA(Thr). The polypeptide is Threonine--tRNA ligase (Bartonella tribocorum (strain CIP 105476 / IBS 506)).